A 54-amino-acid polypeptide reads, in one-letter code: uncharacterized protein (54 aa).

Basic and acidic residues-rich tracts occupy residues 1–19 (MTEKKQQNKPNENPEHNDL) and 26–54 (EELKENMNDEKHKRQQRDNSQSERDYDTK). The interval 1 to 54 (MTEKKQQNKPNENPEHNDLTDPIPNEELKENMNDEKHKRQQRDNSQSERDYDTK) is disordered.

This is an uncharacterized protein from Bacillus subtilis (strain 168).